A 132-amino-acid chain; its full sequence is Small ribosomal subunit protein uS8 (132 aa).

It belongs to the universal ribosomal protein uS8 family. As to quaternary structure, part of the 30S ribosomal subunit. Contacts proteins S5 and S12.

Functionally, one of the primary rRNA binding proteins, it binds directly to 16S rRNA central domain where it helps coordinate assembly of the platform of the 30S subunit. This is Small ribosomal subunit protein uS8 from Rhodopseudomonas palustris (strain HaA2).